The following is a 298-amino-acid chain: Ornithine carbamoyltransferase (298 aa).

Carbamoyl phosphate is bound by residues 50-53 (STRT), Gln-77, Arg-101, and 128-131 (HPCQ). L-ornithine-binding positions include Asn-159, Asp-216, and 220–221 (SM). Carbamoyl phosphate contacts are provided by residues 256 to 257 (CL) and Arg-284.

The protein belongs to the aspartate/ornithine carbamoyltransferase superfamily. OTCase family.

It localises to the cytoplasm. It carries out the reaction carbamoyl phosphate + L-ornithine = L-citrulline + phosphate + H(+). Its pathway is amino-acid biosynthesis; L-arginine biosynthesis; L-arginine from L-ornithine and carbamoyl phosphate: step 1/3. In terms of biological role, reversibly catalyzes the transfer of the carbamoyl group from carbamoyl phosphate (CP) to the N(epsilon) atom of ornithine (ORN) to produce L-citrulline. This chain is Ornithine carbamoyltransferase, found in Methylococcus capsulatus (strain ATCC 33009 / NCIMB 11132 / Bath).